The primary structure comprises 371 residues: MEVISTNTNGSTIFKNGAIPMNGHQNGTSKHQNGTSEHPNGHQNGTSEHQNGHQNGTSEQQNGTISHDNGNKLVGNSNCIKPGWFSEFSALWPGEAFSLKVEKLLFQGKSDYQDVMLFESATYGKVLTLDGAIQHTENGGFPYTEMIVHLPLGSIPNPKKVLIIGGGIGFTLFEMLRYPSIEKIDIVEIDDVVVDVSRKFFPYLAANFNDPRVTLVLGDGAAFVKAAQAEYYDAIIVDSSDPIGPAKDLFERPFFEAVAKALRPGGVVCTQAESIWLHMHIIKQIIANCRQVFKGSVNYAWTTVPTYPTGVIGYMLCSTEGPEVDFKNPVNPIDKETTQVKPKLAPLKFYNSDIHKAAFILPSFARSMIES.

2 stretches are compositionally biased toward polar residues: residues 1–14 (MEVI…STIF) and 23–70 (GHQN…HDNG). Positions 1–70 (MEVISTNTNG…QNGTISHDNG (70 aa)) are disordered. Residues 82–319 (PGWFSEFSAL…GVIGYMLCST (238 aa)) form the PABS domain. Residues glutamine 113, glutamate 188, and 219 to 220 (DG) contribute to the S-adenosyl-L-methionine site. Catalysis depends on aspartate 238, which acts as the Proton acceptor. Tyrosine 307 is a binding site for S-adenosyl-L-methionine.

The protein belongs to the class I-like SAM-binding methyltransferase superfamily. Spermidine/spermine synthase family. As to expression, mainly expressed in roots.

It catalyses the reaction putrescine + S-adenosyl-L-methionine = N-methylputrescine + S-adenosyl-L-homocysteine + H(+). It functions in the pathway alkaloid biosynthesis; nicotine biosynthesis. Involved in the biosynthesis of pyridine alkaloid natural products, leading mainly to the production of anabasine, anatabine, nicotine and nornicotine, effective deterrents against herbivores with antiparasitic and pesticide properties (neurotoxins); nornicotine serves as the precursor in the synthesis of the carcinogen compound N'-nitrosonornicotine (NNN). Methyltransferase that mediates the conversion of putrescine to N-methylputrescine. The polypeptide is Putrescine N-methyltransferase 2 (Nicotiana attenuata (Coyote tobacco)).